The following is a 146-amino-acid chain: Hemoglobin subunit beta (146 aa).

The Globin domain maps to 2 to 146 (HWTAEEKQLI…VAHALARKYH (145 aa)). Residues His-63 and His-92 each contribute to the heme b site.

It belongs to the globin family. In terms of assembly, heterotetramer of two alpha chains and two beta chains. Red blood cells.

Functionally, involved in oxygen transport from the lung to the various peripheral tissues. The protein is Hemoglobin subunit beta (HBB) of Ara ararauna (Blue-and-yellow macaw).